The primary structure comprises 704 residues: Glycine--tRNA ligase beta subunit (704 aa).

This sequence belongs to the class-II aminoacyl-tRNA synthetase family. As to quaternary structure, tetramer of two alpha and two beta subunits.

Its subcellular location is the cytoplasm. It catalyses the reaction tRNA(Gly) + glycine + ATP = glycyl-tRNA(Gly) + AMP + diphosphate. The sequence is that of Glycine--tRNA ligase beta subunit from Rhizobium johnstonii (strain DSM 114642 / LMG 32736 / 3841) (Rhizobium leguminosarum bv. viciae).